Reading from the N-terminus, the 89-residue chain is uncharacterized protein (89 aa).

It to B.licheniformis xpaF1 and to B.subtilis XhlA.

This is an uncharacterized protein from Bacillus licheniformis.